Consider the following 311-residue polypeptide: Reaction center protein L chain (311 aa).

3 consecutive transmembrane segments (helical) span residues 68 to 90, 123 to 151, and 156 to 178; these read FWGF…ETIL, GFAW…SMKL, and HVPI…RPIA. Positions 183 and 213 each coordinate (7R,8Z)-bacteriochlorophyll b. A helical membrane pass occupies residues 211-238; it reads PFHAIGITGLFASTWLLACHGSLILSAA. Position 230 (His-230) interacts with Fe cation. A ubiquinone is bound at residue Phe-253. Residues 262-287 traverse the membrane as a helical segment; it reads GESGVHRLGYIFAIGGILSADLCILL. His-267 contributes to the Fe cation binding site.

Belongs to the reaction center PufL/M/PsbA/D family. As to quaternary structure, reaction center is composed of four bacteriochlorophylls, two bacteriopheophytins, two ubiquinones, one iron, and two highly hydrophobic polypeptide chains (designated L and M).

It localises to the cell membrane. In terms of biological role, the reaction center is a membrane-bound complex that mediates the initial photochemical event in the electron transfer process of photosynthesis. This is Reaction center protein L chain (pufL) from Chloroflexus aurantiacus (strain ATCC 29366 / DSM 635 / J-10-fl).